We begin with the raw amino-acid sequence, 419 residues long: Acetyl transferase GW6a (419 aa).

In terms of domain architecture, N-acetyltransferase spans 12–210 (VRVREFDVEK…GHPVHAHRLP (199 aa)). The segment at 44–68 (VHDHADDGDGAAAKEKKKTKTKTKK) is disordered. Residues 58 to 68 (EKKKTKTKTKK) are compositionally biased toward basic residues.

Belongs to the acetyltransferase family. In terms of assembly, interacts (via C-terminus) with HDR3 (via N-terminus). In terms of processing, ubiquitinated at Lys-63 by HDR3. Polyubiquitination of GW6A delays its degradation by the 26S proteasome and enhances GW6A histone acetyltransferase activity. As to expression, expressed in roots, leaf blades, leaf sheaths, shoot apical meristem and young panicles.

Its subcellular location is the nucleus. In terms of biological role, possesses intrinsic histone acetyltransferase activity and acts as a positive regulator of grain weight, hull size, yield, and plant biomass. Regulates postitively grain weight and yield by enlarging spikelet hulls via increasing cell number and accelerating grain filling. In vitro, catalyzes the acetylation of histone H4 at Lys-6 (H4K5ac), Lys-13 (H4K12ac) and Lys-17 (H4K16ac). Involved in the regulation of plastochron (the time interval between leaf initiation event). This is Acetyl transferase GW6a from Oryza sativa subsp. japonica (Rice).